A 466-amino-acid chain; its full sequence is Argininosuccinate lyase (466 aa).

Belongs to the lyase 1 family. Argininosuccinate lyase subfamily.

The protein localises to the cytoplasm. The enzyme catalyses 2-(N(omega)-L-arginino)succinate = fumarate + L-arginine. It functions in the pathway amino-acid biosynthesis; L-arginine biosynthesis; L-arginine from L-ornithine and carbamoyl phosphate: step 3/3. The polypeptide is Argininosuccinate lyase (Roseobacter denitrificans (strain ATCC 33942 / OCh 114) (Erythrobacter sp. (strain OCh 114))).